The chain runs to 237 residues: Uridylate kinase (237 aa).

10 to 13 (KLSG) contacts ATP. Gly-52 is a UMP binding site. ATP is bound by residues Gly-53 and Arg-57. UMP contacts are provided by residues Asp-72 and 133–140 (TGNPFFTT). The ATP site is built by Thr-160, Tyr-166, and Asp-169.

Belongs to the UMP kinase family. In terms of assembly, homohexamer.

The protein localises to the cytoplasm. It catalyses the reaction UMP + ATP = UDP + ADP. It participates in pyrimidine metabolism; CTP biosynthesis via de novo pathway; UDP from UMP (UMPK route): step 1/1. Inhibited by UTP. Its function is as follows. Catalyzes the reversible phosphorylation of UMP to UDP. The chain is Uridylate kinase from Thiobacillus denitrificans (strain ATCC 25259 / T1).